Consider the following 134-residue polypeptide: Large ribosomal subunit protein bL20 (134 aa).

Belongs to the bacterial ribosomal protein bL20 family.

In terms of biological role, binds directly to 23S ribosomal RNA and is necessary for the in vitro assembly process of the 50S ribosomal subunit. It is not involved in the protein synthesizing functions of that subunit. The sequence is that of Large ribosomal subunit protein bL20 from Rhizobium etli (strain CIAT 652).